Reading from the N-terminus, the 487-residue chain is L-asparagine permease 2 (487 aa).

The next 12 helical transmembrane spans lie at 26–46 (QLQM…GAGG), 50–70 (SAGP…FLIL), 98–118 (VAFV…IVDT), 133–153 (PIPQ…MNLI), 163–183 (FWAS…GTVF), 214–234 (IVLV…VGIA), 256–276 (IACF…YTAY), 290–310 (IGID…ALSS), 341–361 (TGVP…GIIL), 369–389 (AFEI…ATIV), 414–434 (SPFS…LMYF), and 440–460 (PWMI…WYLV).

The protein belongs to the amino acid-polyamine-organocation (APC) superfamily. Amino acid transporter (AAT) (TC 2.A.3.1) family.

It is found in the cell membrane. Functionally, dual function in both nitrogen assimilation and in protection against acid stress during infection. Involved in asparagine uptake. The polypeptide is L-asparagine permease 2 (ansP2) (Mycobacterium bovis (strain ATCC BAA-935 / AF2122/97)).